The chain runs to 382 residues: Draxin-A (382 aa).

Positions 1–22 are cleaved as a signal peptide; sequence MMSSSWCLPLALLFSTLAVSHS. Disordered stretches follow at residues 28-213, 233-252, and 275-297; these read THAK…PPSP, LPTLPPASTKPQKSGRGKMQ, and VDAWPSSRKKDKRRSKNLSSGNV. Low complexity predominate over residues 73–82; sequence RGAKASSGAG. The span at 139 to 149 shows a compositional bias: basic residues; it reads GPRKGRGQGHG. Positions 190-201 are enriched in low complexity; it reads SVSSAAAATSPS. Over residues 281-290 the composition is skewed to basic residues; sequence SRKKDKRRSK. Residues Asn-291 and Asn-296 are each glycosylated (N-linked (GlcNAc...) asparagine).

It belongs to the draxin family.

It localises to the secreted. In terms of biological role, chemorepulsive axon guidance protein required for the development of spinal cord and forebrain commissures. Acts as a chemorepulsive guidance protein for commissural axons during development. Able to inhibit or repel neurite outgrowth from dorsal spinal cord. The polypeptide is Draxin-A (draxin-A) (Salmo salar (Atlantic salmon)).